We begin with the raw amino-acid sequence, 129 residues long: Small ribosomal subunit protein uS11 (129 aa).

Residues 108-129 (TPIPHNGTRPPKRVLKRLRLKK) are disordered. The segment covering 117–129 (PPKRVLKRLRLKK) has biased composition (basic residues).

The protein belongs to the universal ribosomal protein uS11 family. As to quaternary structure, part of the 30S ribosomal subunit. Interacts with proteins S7 and S18. Binds to IF-3.

Functionally, located on the platform of the 30S subunit, it bridges several disparate RNA helices of the 16S rRNA. Forms part of the Shine-Dalgarno cleft in the 70S ribosome. The protein is Small ribosomal subunit protein uS11 of Mycoplasmopsis synoviae (strain 53) (Mycoplasma synoviae).